A 404-amino-acid polypeptide reads, in one-letter code: CD209 antigen (404 aa).

The Cytoplasmic segment spans residues 1-37 (MSDSKEPSVQQLGLLEEEQLRGLGFRQTRGYKSLAGC). 3 short sequence motifs (endocytosis signal) span residues 14 to 15 (LL), 16 to 18 (EEE), and 31 to 34 (YKSL). Residues 38–58 (LGHGALVLQLLSFTLLAGLLI) traverse the membrane as a helical; Signal-anchor for type II membrane protein segment. Residues 59–404 (QVSKFPSSIS…APATPNPPPA (346 aa)) are Extracellular-facing. Asparagine 80 carries N-linked (GlcNAc...) asparagine glycosylation. 7 tandem repeats follow at residues 96–118 (KLQEIYQELTQLKAAVGELPEKS), 119–141 (KQQEIYQELTQLKAAVGELPEKS), 142–164 (KQQEIYQELTQLKAAVGELPEKS), 165–187 (KQQEIYQELTRLKAAVGELPEKS), 188–210 (QQQEIYQELTQLKAAVGELPEKS), 211–233 (KQQEIYQELTRLKAAVGELPEKS), and 234–257 (KQQEIYQELTQLKAAVERLCRPCP). Residues 96-257 (KLQEIYQELT…AVERLCRPCP (162 aa)) form a 7 X approximate tandem repeats region. 3 disulfide bridges follow: cysteine 256/cysteine 267, cysteine 284/cysteine 377, and cysteine 356/cysteine 369. The 116-residue stretch at 263–378 (FQGNCYFMSN…CNLAKFWICK (116 aa)) folds into the C-type lectin domain. Residues glutamate 347, asparagine 349, valine 351, glutamate 354, asparagine 365, and aspartate 366 each contribute to the Ca(2+) site.

As to quaternary structure, homotetramer. Interacts with C1QBP; the interaction is indicative for a C1q:C1QBP:CD209 signaling complex. Interacts with ICAM2 and ICAM3 by binding to mannose-like carbohydrates. Interacts (via C-type lectin domain) with CEACAM1 (via Lewis X moieties); this interaction is regulated by the glycosylation pattern of CEACAM1 on cell types and regulates contact between dendritic cells and neutrophils.

It is found in the membrane. Pathogen-recognition receptor expressed on the surface of immature dendritic cells (DCs) and involved in initiation of primary immune response. Thought to mediate the endocytosis of pathogens which are subsequently degraded in lysosomal compartments. The receptor returns to the cell membrane surface and the pathogen-derived antigens are presented to resting T-cells via MHC class II proteins to initiate the adaptive immune response. Probably recognizes in a calcium-dependent manner high mannose N-linked oligosaccharides in a variety of pathogen antigens. Functionally, on DCs it is a high affinity receptor for ICAM2 and ICAM3 by binding to mannose-like carbohydrates. May act as a DC rolling receptor that mediates transendothelial migration of DC presursors from blood to tissues by binding endothelial ICAM2. Seems to regulate DC-induced T-cell proliferation by binding to ICAM3 on T-cells in the immunological synapse formed between DC and T-cells. The chain is CD209 antigen (CD209) from Nomascus concolor (Black crested gibbon).